Consider the following 246-residue polypeptide: tRNA (guanine-N(1)-)-methyltransferase (246 aa).

Residues Gly113 and 132 to 137 (LGDYVL) each bind S-adenosyl-L-methionine.

The protein belongs to the RNA methyltransferase TrmD family. Homodimer.

It is found in the cytoplasm. It carries out the reaction guanosine(37) in tRNA + S-adenosyl-L-methionine = N(1)-methylguanosine(37) in tRNA + S-adenosyl-L-homocysteine + H(+). Specifically methylates guanosine-37 in various tRNAs. In Lactiplantibacillus plantarum (strain ATCC BAA-793 / NCIMB 8826 / WCFS1) (Lactobacillus plantarum), this protein is tRNA (guanine-N(1)-)-methyltransferase.